Reading from the N-terminus, the 71-residue chain is Small ribosomal subunit protein bS21 (71 aa).

The tract at residues 39–71 (EKPTTVRKRAKAAAQKRHAKKLARENARRVRLY) is disordered. Residues 43-59 (TVRKRAKAAAQKRHAKK) show a composition bias toward basic residues. Basic and acidic residues predominate over residues 60-71 (LARENARRVRLY).

Belongs to the bacterial ribosomal protein bS21 family.

The chain is Small ribosomal subunit protein bS21 from Vibrio atlanticus (strain LGP32) (Vibrio splendidus (strain Mel32)).